Here is a 204-residue protein sequence, read N- to C-terminus: Small ribosomal subunit protein uS4 (204 aa).

An S4 RNA-binding domain is found at 92 to 156 (RRLDALVLRS…SKVPFQVARE (65 aa)).

It belongs to the universal ribosomal protein uS4 family. In terms of assembly, part of the 30S ribosomal subunit. Contacts protein S5. The interaction surface between S4 and S5 is involved in control of translational fidelity.

One of the primary rRNA binding proteins, it binds directly to 16S rRNA where it nucleates assembly of the body of the 30S subunit. Functionally, with S5 and S12 plays an important role in translational accuracy. This is Small ribosomal subunit protein uS4 from Streptomyces griseus subsp. griseus (strain JCM 4626 / CBS 651.72 / NBRC 13350 / KCC S-0626 / ISP 5235).